A 417-amino-acid polypeptide reads, in one-letter code: EKCIVGTGLERQAALDSGVLAIVEHEGKIIYTDTDKIILSGNGDTHSIPLVLYQRFNKNTCMHQNPRIPGGKCIKKGQILADGAATVGGELGLGKNVLVAYMPWEGYNFEDAVLISERLVYEDIYTSFHIRKYEIQTYVTSQGPERVTSEIPHLEAHLLRNLDKNGIVGLGSWVETGDILVGKLTPQMAKESSYAPEDRLLRAILGIQVSTSKETCLKLPIGGRGRVIDVRWIQKKGGSNYNPETIHIYILQKREIKVGDKVAGRHGNKGIISKILPRQDMPYLQDGRPVDMVFNPLGVPSRMNVGQIFECSLGLAGGLLDRHYRITPFDERYEHEASRKLVFSELYQASKQTAKPWIFEPEYPGKSRIFDGRTGDPFEQPVIIGNPYILKLIHQVDDKIHGRSSGHYALVTQQPLR.

This sequence belongs to the RNA polymerase beta chain family. In plastids the minimal PEP RNA polymerase catalytic core is composed of four subunits: alpha, beta, beta', and beta''. When a (nuclear-encoded) sigma factor is associated with the core the holoenzyme is formed, which can initiate transcription.

Its subcellular location is the plastid. The protein localises to the chloroplast. The enzyme catalyses RNA(n) + a ribonucleoside 5'-triphosphate = RNA(n+1) + diphosphate. Its function is as follows. DNA-dependent RNA polymerase catalyzes the transcription of DNA into RNA using the four ribonucleoside triphosphates as substrates. The sequence is that of DNA-directed RNA polymerase subunit beta (rpoB) from Saponaria officinalis (Common soapwort).